We begin with the raw amino-acid sequence, 82 residues long: Putative membrane protein insertion efficiency factor (82 aa).

It belongs to the UPF0161 family.

Its subcellular location is the cell inner membrane. Its function is as follows. Could be involved in insertion of integral membrane proteins into the membrane. The sequence is that of Putative membrane protein insertion efficiency factor from Rickettsia felis (strain ATCC VR-1525 / URRWXCal2) (Rickettsia azadi).